The chain runs to 92 residues: Small ribosomal subunit protein uS19 (92 aa).

Belongs to the universal ribosomal protein uS19 family.

Protein S19 forms a complex with S13 that binds strongly to the 16S ribosomal RNA. This Novosphingobium aromaticivorans (strain ATCC 700278 / DSM 12444 / CCUG 56034 / CIP 105152 / NBRC 16084 / F199) protein is Small ribosomal subunit protein uS19.